Here is a 700-residue protein sequence, read N- to C-terminus: MRRFLLLYATQRGQAKAIAEEISEQALSHGFSADLHCVSESEKYDLKTETGPLVMVVSTTGTGDPPDTARKFVKEIHNKTLPTDFFAHLWYGLLGLGDSEYTYFCNGGKVIDKRLQELGAQHFYDTGHADDCVGLELVVEPWIDGLWPALTKHFKSLGGQEDMSDSDTLAQASDAPLSMAMKPELLHIQSQVELLSLEDVGKRDSELQEQNETNKNQPSRIEDFDSSLVNSVPPLSQSSLSIPAVSPEYLEVYLQESLGQDENQASVPPSVDPIFQVPISKAVELTTNDAIKTTLLLELDISKVEFSHQPGDSFNVICPNSGSEVEDLLQRLQLADKQAHRVILKIKMDTKKKGASLPQHVPEGSSLQFIFTWCLEIRAVPKKAFLRALSDYTSDATEKRRLQELCSKQGAADYNRFIRDASVCLLDLLLTFPSCQPPLNLLLEHLPKLQPRPYSCASSSLLHPDKLHFVFNIVELPSNTTAASLRKGVCTGWLATLVAPFLQPNTEVLTADHSDALAPEILISPRATNSFHLPDDLSAPIIMVGPGTGVAPFVGFLQHREKLQEQHPDGNFGAMWLFFGCRHKDRDYLFREELRHFLKTGVLTHLKVSFSRDAAPEEEEEAPAKYVQDNLQHHSQQVARTLLQENGYIYVCGDAKNMAKDVHDALVEIISKEAGVDKLEAMKTLATLKQEKRYLQDIWS.

Residues 4–147 (FLLLYATQRG…VVEPWIDGLW (144 aa)) enclose the Flavodoxin-like domain. FMN-binding positions include 10–14 (TQRGQ) and 93–124 (LLGL…QHFY). Residues 168-247 (TLAQASDAPL…SSLSIPAVSP (80 aa)) form a hinge region. S173 and S190 each carry phosphoserine. The 263-residue stretch at 272–534 (DPIFQVPISK…PRATNSFHLP (263 aa)) folds into the FAD-binding FR-type domain. K292 lines the NADP(+) pocket. FAD is bound by residues 452-455 (RPYS) and 488-491 (GVCT). NADP(+)-binding positions include 611–612 (SR), 626–628 (YVQ), and D661. Position 699 (W699) interacts with FAD.

Forms a multiprotein complex with MMACHC, MMADHC and MTR. FAD is required as a cofactor. FMN serves as cofactor.

It is found in the cytoplasm. It carries out the reaction 2 methylcob(III)alamin-[methionine synthase] + 2 S-adenosyl-L-homocysteine + NADP(+) + H(+) = 2 cob(II)alamin-[methionine synthase] + 2 S-adenosyl-L-methionine + NADPH. It catalyses the reaction 2 cob(II)alamin + A + 2 H2O + 2 H(+) = 2 aquacob(III)alamin + AH2. In terms of biological role, key enzyme in methionine and folate homeostasis responsible for the reactivation of methionine synthase (MTR/MS) activity by catalyzing the reductive methylation of MTR-bound cob(II)alamin. Cobalamin (vitamin B12) forms a complex with MTR to serve as an intermediary in methyl transfer reactions that cycles between MTR-bound methylcob(III)alamin and MTR bound-cob(I)alamin forms, and occasional oxidative escape of the cob(I)alamin intermediate during the catalytic cycle leads to the inactive cob(II)alamin species. The processing of cobalamin in the cytosol occurs in a multiprotein complex composed of at least MMACHC, MMADHC, MTRR and MTR which may contribute to shuttle safely and efficiently cobalamin towards MTR in order to produce methionine. Also necessary for the utilization of methyl groups from the folate cycle, thereby affecting transgenerational epigenetic inheritance. Also acts as a molecular chaperone for methionine synthase by stabilizing apoMTR and incorporating methylcob(III)alamin into apoMTR to form the holoenzyme. Also serves as an aquacob(III)alamin reductase by reducing aquacob(III)alamin to cob(II)alamin; this reduction leads to stimulation of the conversion of apoMTR and aquacob(III)alamin to MTR holoenzyme. The polypeptide is Methionine synthase reductase (Mtrr) (Rattus norvegicus (Rat)).